The sequence spans 376 residues: Chlorophyll synthase, chloroplastic (376 aa).

The transit peptide at 1–47 (MATSHLLAAASSTAASSATFRPPLLSLRSPPPSSLRLNRRRHFQVVR) directs the protein to the chloroplast. A disordered region spans residues 48 to 69 (AAETDKETKANAPEKAPAGGSS). 8 helical membrane-spanning segments follow: residues 95-115 (PVTW…SGNF), 171-191 (VITQ…LLDV), 197-217 (FPII…YSAP), 230-250 (FALG…LFGT), 255-275 (IVVL…VNDF), 300-320 (WICV…LFSS), 325-345 (YALA…QYFL), and 355-375 (YQAS…LATS).

Belongs to the UbiA prenyltransferase family. Chlorophyll synthase subfamily.

Its subcellular location is the plastid. It localises to the chloroplast membrane. It catalyses the reaction phytyl diphosphate + chlorophyllide a + H(+) = chlorophyll a + diphosphate. In terms of biological role, involved in one of the last steps of the biosynthesis of chlorophyll a. This is Chlorophyll synthase, chloroplastic (CHLG) from Oryza sativa subsp. japonica (Rice).